Reading from the N-terminus, the 223-residue chain is Probable transaldolase (223 aa).

The Schiff-base intermediate with substrate role is filled by Lys-91.

This sequence belongs to the transaldolase family. Type 3B subfamily.

It localises to the cytoplasm. The catalysed reaction is D-sedoheptulose 7-phosphate + D-glyceraldehyde 3-phosphate = D-erythrose 4-phosphate + beta-D-fructose 6-phosphate. It participates in carbohydrate degradation; pentose phosphate pathway; D-glyceraldehyde 3-phosphate and beta-D-fructose 6-phosphate from D-ribose 5-phosphate and D-xylulose 5-phosphate (non-oxidative stage): step 2/3. Transaldolase is important for the balance of metabolites in the pentose-phosphate pathway. The polypeptide is Probable transaldolase (Prosthecochloris aestuarii (strain DSM 271 / SK 413)).